Here is a 242-residue protein sequence, read N- to C-terminus: NAD(P)H-hydrate epimerase (242 aa).

The 211-residue stretch at 11–221 (AKALDAELMS…KVITKKFNLS (211 aa)) folds into the YjeF N-terminal domain. 61–65 (NNGGD) contacts (6S)-NADPHX. Residues N62 and D128 each coordinate K(+). (6S)-NADPHX-binding positions include 132 to 138 (GFSFKGP) and D161. Residue S164 participates in K(+) binding.

This sequence belongs to the NnrE/AIBP family. It depends on K(+) as a cofactor.

The protein resides in the cytoplasm. Its subcellular location is the mitochondrion. It localises to the nucleus. It carries out the reaction (6R)-NADHX = (6S)-NADHX. It catalyses the reaction (6R)-NADPHX = (6S)-NADPHX. Its function is as follows. Catalyzes the epimerization of the S- and R-forms of NAD(P)HX, a damaged form of NAD(P)H that is a result of enzymatic or heat-dependent hydration. This is a prerequisite for the S-specific NAD(P)H-hydrate dehydratase to allow the repair of both epimers of NAD(P)HX. May have a role in meiosis. The polypeptide is NAD(P)H-hydrate epimerase (mug182) (Schizosaccharomyces pombe (strain 972 / ATCC 24843) (Fission yeast)).